Consider the following 513-residue polypeptide: Probable helicase MJ1565 (513 aa).

Residues Arg151, 160 to 165 (GMGKSN), and 467 to 468 (KV) each bind ATP.

The protein belongs to the HerA family.

It carries out the reaction Couples ATP hydrolysis with the unwinding of duplex DNA at the replication fork by translocating in the 5'-3' direction. This creates two antiparallel DNA single strands (ssDNA). The leading ssDNA polymer is the template for DNA polymerase III holoenzyme which synthesizes a continuous strand.. The catalysed reaction is ATP + H2O = ADP + phosphate + H(+). The enzyme catalyses Couples ATP hydrolysis with the unwinding of duplex DNA by translocating in the 3'-5' direction.. A probably bidirectional DNA helicase. This chain is Probable helicase MJ1565, found in Methanocaldococcus jannaschii (strain ATCC 43067 / DSM 2661 / JAL-1 / JCM 10045 / NBRC 100440) (Methanococcus jannaschii).